Consider the following 385-residue polypeptide: A-type ATP synthase subunit C (385 aa).

The protein belongs to the V-ATPase V0D/AC39 subunit family. In terms of assembly, has multiple subunits with at least A(3), B(3), C, D, E, F, H, I and proteolipid K(x).

It localises to the cell membrane. Component of the A-type ATP synthase that produces ATP from ADP in the presence of a proton gradient across the membrane. The chain is A-type ATP synthase subunit C from Methanosphaera stadtmanae (strain ATCC 43021 / DSM 3091 / JCM 11832 / MCB-3).